Here is a 361-residue protein sequence, read N- to C-terminus: Peptide chain release factor 1 (361 aa).

Glutamine 235 bears the N5-methylglutamine mark.

Belongs to the prokaryotic/mitochondrial release factor family. Methylated by PrmC. Methylation increases the termination efficiency of RF1.

Its subcellular location is the cytoplasm. In terms of biological role, peptide chain release factor 1 directs the termination of translation in response to the peptide chain termination codons UAG and UAA. In Chlamydia abortus (strain DSM 27085 / S26/3) (Chlamydophila abortus), this protein is Peptide chain release factor 1.